Here is a 226-residue protein sequence, read N- to C-terminus: Gap junction beta-2 protein (226 aa).

The stretch at 2-13 is an intramembrane region; that stretch reads DWGTLQTILGGV. Over 14 to 20 the chain is Cytoplasmic; the sequence is NKHSTSI. The chain crosses the membrane as a helical span at residues 21-40; the sequence is GKIWLTVLFIFRIMILVVAA. Residues 41-73 lie on the Extracellular side of the membrane; sequence KEVWGDEQADFVCNTLQPGCKNVCYDHYFPISH. Positions 42, 45, and 47 each coordinate Ca(2+). Cystine bridges form between Cys53–Cys180, Cys60–Cys174, and Cys64–Cys169. The chain crosses the membrane as a helical span at residues 74–94; it reads IRLWALQLIFVSTPALLVAMH. At 95-135 the chain is on the cytoplasmic side; that stretch reads VAYRRHEKKRKFIKGEIKSEFKDIEEIKTQKVRIEGSLWWT. The chain crosses the membrane as a helical span at residues 136–156; sequence YTSSIFFRVIFEAAFMYVFYV. The Extracellular portion of the chain corresponds to 157-189; that stretch reads MYDGFSMQRLVKCNAWPCPNTVDCFVSRPTEKT. The chain crosses the membrane as a helical span at residues 190 to 210; that stretch reads VFTVFMIAVSGICILLNVTEL. The Cytoplasmic segment spans residues 211–226; it reads CYLLIRYCSGKSKKPV.

The protein belongs to the connexin family. Beta-type (group I) subfamily. A hemichannel or connexon is composed of a hexamer of connexins. A functional gap junction is formed by the apposition of two hemichannels. Forms heteromeric channels with GJB4. Interacts with CNST.

It is found in the cell membrane. The protein resides in the cell junction. It localises to the gap junction. In terms of biological role, structural component of gap junctions. Gap junctions are dodecameric channels that connect the cytoplasm of adjoining cells. They are formed by the docking of two hexameric hemichannels, one from each cell membrane. Small molecules and ions diffuse from one cell to a neighboring cell via the central pore. This Gorilla gorilla gorilla (Western lowland gorilla) protein is Gap junction beta-2 protein (GJB2).